We begin with the raw amino-acid sequence, 253 residues long: HTH-type transcriptional regulator YdeO (253 aa).

Positions 137-233 (GKVRNIVNMK…GNSPKRVSKE (97 aa)) constitute an HTH araC/xylS-type domain. 2 consecutive DNA-binding regions (H-T-H motif) follow at residues 154–175 (KDIC…KQEQ) and 200–223 (VNKI…RKHF).

In terms of biological role, induces the expression of gadE and mdtEF. Could also regulate the expression of other genes involved in acid resistance. This Escherichia coli O6:H1 (strain CFT073 / ATCC 700928 / UPEC) protein is HTH-type transcriptional regulator YdeO (ydeO).